Reading from the N-terminus, the 650-residue chain is Glycoprotein antigen BM86 (650 aa).

The first 19 residues, 1–19 (MRGIALFVAAVSLIVEGTA), serve as a signal peptide directing secretion. EGF-like domains are found at residues 20–66 (ESSI…KQCE) and 67–104 (YKDTCKTRECSYGRCVESNPSKASCVCEASDDLTLQCK). 6 disulfides stabilise this stretch: C24-C37, C32-C49, C51-C65, C71-C81, C76-C91, and C93-C103. N-linked (GlcNAc...) asparagine glycosylation is found at N141 and N182. EGF-like domains follow at residues 205-247 (CINA…ITCK), 251-292 (HTVS…DTCI), and 291-335 (CISD…NECL). 9 cysteine pairs are disulfide-bonded: C209-C222, C218-C231, C233-C246, C255-C269, C263-C278, C280-C291, C295-C307, C300-C316, and C318-C334. N348 and N382 each carry an N-linked (GlcNAc...) asparagine glycan. EGF-like domains are found at residues 482–530 (RRSV…IGCI) and 531–568 (ERTTCNPKEIQECQDKKLECVYKNHKAECECPDDHECY). 6 disulfides stabilise this stretch: C486/C500, C492/C516, C518/C529, C535/C550, C543/C559, and C561/C567. A disordered region spans residues 603–628 (KSEATTAATTTTKAKDKDPDPGKSSA). A lipid anchor (GPI-anchor amidated serine) is attached at S627. Residues 628–650 (AAAVSATGLLLLLAATSVTAASL) constitute a propeptide, removed in mature form.

It localises to the cell membrane. The protein is Glycoprotein antigen BM86 of Rhipicephalus microplus (Cattle tick).